The sequence spans 422 residues: MEAYIRQKRATPGMVQASDLQLVRPMSAVNRNGREVHAYDGPMQFMMSPSNPDQIISSGSPTTVTATGTTTGSVTTTPTSPYSDATLEKLTPSSQDSEDEESTPVDILPSSNSFDRHSDGHLTHSAPISPALNNNVSRDSQQDSGSSGNLKSMEHSSPQASGHNDAEGDVAGPIEQWVTQPAAQGVLYKCRITRDRKGMDRGLFPIYYLHLERDYGKRLFCLAGRKRKKSKTSNYIISCDPTDLSRQADGFVGKLRSNVFGTTFFVYDNGKKDDPVSPRLDLAVVIYDTNILGFKGPRNMTVLLPGMTEDDQRVKINSSDSHGQGLLDSWKSKHMDNVVELHNKTPIWNDETQSYVLNFHGRVTQASVKNFQLVHDSDPDYIVMQFGRTSDDIFTMDFRYPLCAFQAFAIALSSFDGKLACE.

Residues 49–169 (PSNPDQIISS…ASGHNDAEGD (121 aa)) form a disordered region. Residues 57–81 (SSGSPTTVTATGTTTGSVTTTPTSP) show a composition bias toward low complexity.

Belongs to the TUB family.

Its subcellular location is the cytoplasm. The protein localises to the nucleus. This chain is Protein king tubby 2 (king-tubby2), found in Culex quinquefasciatus (Southern house mosquito).